The chain runs to 301 residues: Acetylglutamate kinase (301 aa).

Residues 76 to 77 (GG), R98, and N192 each bind substrate.

This sequence belongs to the acetylglutamate kinase family. ArgB subfamily.

The protein resides in the cytoplasm. It carries out the reaction N-acetyl-L-glutamate + ATP = N-acetyl-L-glutamyl 5-phosphate + ADP. It functions in the pathway amino-acid biosynthesis; L-arginine biosynthesis; N(2)-acetyl-L-ornithine from L-glutamate: step 2/4. Its function is as follows. Catalyzes the ATP-dependent phosphorylation of N-acetyl-L-glutamate. The protein is Acetylglutamate kinase of Chlorobaculum parvum (strain DSM 263 / NCIMB 8327) (Chlorobium vibrioforme subsp. thiosulfatophilum).